We begin with the raw amino-acid sequence, 959 residues long: Translation initiation factor IF-2 (959 aa).

Positions 1–10 (MSDKTNDDKT) are enriched in basic and acidic residues. The interval 1–374 (MSDKTNDDKT…SQMQETREKI (374 aa)) is disordered. Residues 27–37 (EQSTVRQNFSH) show a composition bias toward polar residues. Composition is skewed to low complexity over residues 63 to 118 (AAAA…VTKP) and 128 to 138 (QRPGGQQAQRP). Composition is skewed to basic and acidic residues over residues 154-225 (SEMD…EAAK) and 232-241 (ARSERRDDAR). Positions 246-284 (GARPQQAGRPQGGRPQPAGRPQQGSPRPAPIIADAAPIA) are enriched in low complexity. The segment covering 318-333 (PEVRAPKVVKGEDDRR) has biased composition (basic and acidic residues). A tr-type G domain is found at 457-626 (SRPPVVTIMG…LLQAEMLDLK (170 aa)). Positions 466–473 (GHVDHGKT) are G1. 466–473 (GHVDHGKT) lines the GTP pocket. Residues 491 to 495 (GITQH) are G2. The interval 512-515 (DTPG) is G3. GTP-binding positions include 512–516 (DTPGH) and 566–569 (NKID). A G4 region spans residues 566 to 569 (NKID). Positions 602–604 (SAK) are G5.

Belongs to the TRAFAC class translation factor GTPase superfamily. Classic translation factor GTPase family. IF-2 subfamily.

The protein localises to the cytoplasm. In terms of biological role, one of the essential components for the initiation of protein synthesis. Protects formylmethionyl-tRNA from spontaneous hydrolysis and promotes its binding to the 30S ribosomal subunits. Also involved in the hydrolysis of GTP during the formation of the 70S ribosomal complex. This chain is Translation initiation factor IF-2, found in Brucella suis biovar 1 (strain 1330).